Reading from the N-terminus, the 130-residue chain is MSGNRGGSYISGIVPSFKERRPFHERQKDVEEIRSQQPNKVPVIIERFDGERSLPLMDRCKFLVPEHITVAELMSIVRRRLQLHPQQAFFLLVNERSMVSNSMSMSNLYSQERDPDGFVYMVYTSQPAFG.

Residue glycine 130 is the site of Phosphatidylethanolamine amidated glycine attachment.

The protein belongs to the ATG8 family. May interact with vps-39. Interacts with lgg-3; the interaction is direct. Interacts with atg-16.1 (via WD domain) and atg-16.2 (via WD 5-6 repeats); the interactions are direct. Interacts with sepa-1 (via the LIR motifs); the interaction is direct. Interacts with sqst-1 (via the LIR motifs); the interaction is direct. Interacts with epg-2 (via the LIR motifs); the interaction is weak. Interacts with atg-7; the interaction is direct. Interacts with atg-3. The interaction with atg-7 and atg-3 may be required for the lipidation of lgg-2. Post-translationally, this protein is subject to lipidation. Lipidation is regulated by lgg-1.

The protein localises to the cytoplasmic vesicle. The protein resides in the autophagosome. It is found in the cytoplasm. It localises to the cell membrane. Its function is as follows. Ubiquitin-like modifier involved in the formation of autophagosomal vacuoles (autophagosomes). When lipidated mediates tethering between adjacent membranes and stimulates membrane fusion. Less effective at promoting membrane fusion than lgg-1. Acts upstream of the autophagy protein epg-5 in the aggrephagy pathway, which is the macroautophagic degradation of ubiquitinated protein aggregates, and preferentially interacts with autophagy proteins and substrates containing LIR motifs to mediate autophagosome formation and protein aggregate degradation. In particular binds to components of an atg-5-lgg-3-atg-16 complex to regulate autophagosome formation and cargo sequestration. Required for the degradation of specific sqst-1-containing aggregates during embryogenesis and the early stages of larval development. Involved in allophagy, which is an autophagic process in which paternal mitochondria and organelles are degraded during fertilization, and moreover is required for the degradation of lgg-1-positive allophagic autophagosomes in embryos. Involved in xenophagy, the autophagy-mediated degradation of pathogens and pathogen products, such as toxins. Also plays a role in membrane-pore repair. Through HOPS complex subunit vps-39, tethers lysosomes with autophagosomes to form autolysosomes. Plays a role in the distribution and clearance of germ cell specific P-granules from somatic cells to ensure exclusive localization of the P-granules in germ cells. Essential for dauer development and life-span extension. This chain is Protein lgg-2, found in Caenorhabditis elegans.